We begin with the raw amino-acid sequence, 392 residues long: Probable tRNA sulfurtransferase (392 aa).

The THUMP domain occupies 63–169 (GRAADAAADT…DAEAFVFLTH (107 aa)). ATP is bound by residues 187-188 (LV), arginine 270, glycine 292, and glutamine 301.

This sequence belongs to the ThiI family.

The protein localises to the cytoplasm. It catalyses the reaction [ThiI sulfur-carrier protein]-S-sulfanyl-L-cysteine + a uridine in tRNA + 2 reduced [2Fe-2S]-[ferredoxin] + ATP + H(+) = [ThiI sulfur-carrier protein]-L-cysteine + a 4-thiouridine in tRNA + 2 oxidized [2Fe-2S]-[ferredoxin] + AMP + diphosphate. The enzyme catalyses [ThiS sulfur-carrier protein]-C-terminal Gly-Gly-AMP + S-sulfanyl-L-cysteinyl-[cysteine desulfurase] + AH2 = [ThiS sulfur-carrier protein]-C-terminal-Gly-aminoethanethioate + L-cysteinyl-[cysteine desulfurase] + A + AMP + 2 H(+). It functions in the pathway cofactor biosynthesis; thiamine diphosphate biosynthesis. In terms of biological role, catalyzes the ATP-dependent transfer of a sulfur to tRNA to produce 4-thiouridine in position 8 of tRNAs, which functions as a near-UV photosensor. Also catalyzes the transfer of sulfur to the sulfur carrier protein ThiS, forming ThiS-thiocarboxylate. This is a step in the synthesis of thiazole, in the thiamine biosynthesis pathway. The sulfur is donated as persulfide by IscS. The protein is Probable tRNA sulfurtransferase of Halobacterium salinarum (strain ATCC 29341 / DSM 671 / R1).